The following is a 363-amino-acid chain: UDP-N-acetylglucosamine--N-acetylmuramyl-(pentapeptide) pyrophosphoryl-undecaprenol N-acetylglucosamine transferase (363 aa).

Residues 13-15 (TGG), Asn-125, Arg-166, Ser-195, Ile-249, 268-273 (ALTVSE), and Gln-294 contribute to the UDP-N-acetyl-alpha-D-glucosamine site.

It belongs to the glycosyltransferase 28 family. MurG subfamily.

The protein localises to the cell inner membrane. It catalyses the reaction di-trans,octa-cis-undecaprenyl diphospho-N-acetyl-alpha-D-muramoyl-L-alanyl-D-glutamyl-meso-2,6-diaminopimeloyl-D-alanyl-D-alanine + UDP-N-acetyl-alpha-D-glucosamine = di-trans,octa-cis-undecaprenyl diphospho-[N-acetyl-alpha-D-glucosaminyl-(1-&gt;4)]-N-acetyl-alpha-D-muramoyl-L-alanyl-D-glutamyl-meso-2,6-diaminopimeloyl-D-alanyl-D-alanine + UDP + H(+). It functions in the pathway cell wall biogenesis; peptidoglycan biosynthesis. Its function is as follows. Cell wall formation. Catalyzes the transfer of a GlcNAc subunit on undecaprenyl-pyrophosphoryl-MurNAc-pentapeptide (lipid intermediate I) to form undecaprenyl-pyrophosphoryl-MurNAc-(pentapeptide)GlcNAc (lipid intermediate II). In Cellvibrio japonicus (strain Ueda107) (Pseudomonas fluorescens subsp. cellulosa), this protein is UDP-N-acetylglucosamine--N-acetylmuramyl-(pentapeptide) pyrophosphoryl-undecaprenol N-acetylglucosamine transferase.